The following is a 318-amino-acid chain: Vomeronasal type-1 receptor 45 (318 aa).

At 1-32 the chain is on the extracellular side; that stretch reads MSEILFFSPQPLFSHMMNKNSRLHTHSNIKNT. The chain crosses the membrane as a helical span at residues 33-53; sequence FFSEIGIGILGNSFLLLFHIL. The Cytoplasmic portion of the chain corresponds to 54-65; it reads KFIRGHRLRLTD. The chain crosses the membrane as a helical span at residues 66–86; it reads LPIGLLSLIHLLMLLLMAFIA. The Extracellular segment spans residues 87-109; sequence TDIFISRRGWDDIICKFLVYLYR. A disulfide bridge links Cys101 with Cys188. Residues 110 to 130 form a helical membrane-spanning segment; that stretch reads VLRGLSLCTTSMLSVLQAIIL. Topologically, residues 131 to 150 are cytoplasmic; it reads SPRSSCLAKLKHKYPHHISC. Residues 151-171 traverse the membrane as a helical segment; that stretch reads AIIFLSVLYMLISSHILLSII. Residues 172 to 206 are Extracellular-facing; the sequence is ATPNLTRNDFLYVTQSCSILPLSYVMQSMYSTLLA. An N-linked (GlcNAc...) asparagine glycan is attached at Asn175. A helical membrane pass occupies residues 207–227; it reads LREVFLISLMVLSTLYMVVLL. Topologically, residues 228-254 are cytoplasmic; it reads CRHRKQAQHLQGTSLSPKASAEQRATQ. A helical transmembrane segment spans residues 255–275; it reads TILMLMTFFVLMSIFDSIVSC. Residues 276 to 285 are Extracellular-facing; sequence SRTMFLDDPT. The helical transmembrane segment at 286–306 threads the bilayer; the sequence is SYSIHIFVMHIYATVSPFVFM. Topologically, residues 307–318 are cytoplasmic; it reads STEKHIVNILRG.

This sequence belongs to the G-protein coupled receptor 1 family. As to expression, expressed in a subset of sensory neurons located in the apical layer of the vomeronasal organ.

It localises to the cell membrane. Its function is as follows. Putative pheromone receptor implicated in the regulation of social and reproductive behavior. The polypeptide is Vomeronasal type-1 receptor 45 (Vmn1r45) (Mus musculus (Mouse)).